The sequence spans 197 residues: 3-isopropylmalate dehydratase small subunit (197 aa).

Belongs to the LeuD family. LeuD type 1 subfamily. Heterodimer of LeuC and LeuD.

The catalysed reaction is (2R,3S)-3-isopropylmalate = (2S)-2-isopropylmalate. The protein operates within amino-acid biosynthesis; L-leucine biosynthesis; L-leucine from 3-methyl-2-oxobutanoate: step 2/4. Catalyzes the isomerization between 2-isopropylmalate and 3-isopropylmalate, via the formation of 2-isopropylmaleate. This chain is 3-isopropylmalate dehydratase small subunit, found in Streptococcus suis (strain 98HAH33).